Reading from the N-terminus, the 420-residue chain is 4-hydroxy-3-methylbut-2-en-1-yl diphosphate synthase (flavodoxin) (420 aa).

Cysteine 307, cysteine 310, cysteine 353, and glutamate 360 together coordinate [4Fe-4S] cluster.

It belongs to the IspG family. The cofactor is [4Fe-4S] cluster.

It carries out the reaction (2E)-4-hydroxy-3-methylbut-2-enyl diphosphate + oxidized [flavodoxin] + H2O + 2 H(+) = 2-C-methyl-D-erythritol 2,4-cyclic diphosphate + reduced [flavodoxin]. Its pathway is isoprenoid biosynthesis; isopentenyl diphosphate biosynthesis via DXP pathway; isopentenyl diphosphate from 1-deoxy-D-xylulose 5-phosphate: step 5/6. Functionally, converts 2C-methyl-D-erythritol 2,4-cyclodiphosphate (ME-2,4cPP) into 1-hydroxy-2-methyl-2-(E)-butenyl 4-diphosphate. The chain is 4-hydroxy-3-methylbut-2-en-1-yl diphosphate synthase (flavodoxin) from Brucella abortus (strain S19).